We begin with the raw amino-acid sequence, 567 residues long: Pyruvate decarboxylase (567 aa).

The pyruvate site is built by Asp-28 and His-117. Residues Thr-393 and 416–418 contribute to the thiamine diphosphate site; that span reads GSI. Asp-447 lines the Mg(2+) pocket. Thiamine diphosphate is bound by residues 448–449 and 475–480; these read GS and NDGYTI. The Mg(2+) site is built by Asn-475 and Gly-477. Glu-481 contacts pyruvate.

The protein belongs to the TPP enzyme family. In terms of assembly, homotetramer. Requires Mg(2+) as cofactor. The cofactor is thiamine diphosphate.

The protein localises to the cytoplasm. It carries out the reaction a 2-oxocarboxylate + H(+) = an aldehyde + CO2. The catalysed reaction is pyruvate + H(+) = acetaldehyde + CO2. The polypeptide is Pyruvate decarboxylase (PDC11) (Candida albicans (strain SC5314 / ATCC MYA-2876) (Yeast)).